The chain runs to 498 residues: Pentatricopeptide repeat-containing protein At3g61360 (498 aa).

PPR repeat units follow at residues 102–132 (TSDS…VRKD), 138–172 (SFKS…IFRK), 175–205 (GVDE…LHSR), 209–243 (DVKT…GFKP), 244–278 (NSVT…DFDI), 279–313 (TVQI…GLTP), 314–348 (DCGA…GIEP), 349–385 (DSVT…SLVP), and 386–420 (KTPT…GYCP).

This sequence belongs to the PPR family. P subfamily.

The protein is Pentatricopeptide repeat-containing protein At3g61360 of Arabidopsis thaliana (Mouse-ear cress).